The primary structure comprises 462 residues: Gamma-aminobutyric acid receptor subunit alpha-5 (462 aa).

Positions 1-31 are cleaved as a signal peptide; it reads MDNGMFSSFIMIKNLLLFCISMNLASHFGFS. The Extracellular segment spans residues 32 to 260; sequence QMPTSSVKAE…FHLKRKIGYF (229 aa). N-linked (GlcNAc...) asparagine glycosylation is present at N45. R101 serves as a coordination point for 4-aminobutanoate. N-linked (GlcNAc...) asparagine glycosylation is present at N145. T164 contacts 4-aminobutanoate. Cysteines 173 and 187 form a disulfide. Residues N207 and N236 are each glycosylated (N-linked (GlcNAc...) asparagine). 3 helical membrane passes run 261–281, 287–308, and 319–340; these read VIQT…SFWL, PART…ISAR, and AMDW…EFAT. The Cytoplasmic portion of the chain corresponds to 341-427; that stretch reads VNYFTKRGWA…TYNSISKIDK (87 aa). Residue K355 forms a Glycyl lysine isopeptide (Lys-Gly) (interchain with G-Cter in ubiquitin) linkage. Positions 375-412 are disordered; it reads TNAYTTGKMTHPPNIPKEQTPAGTTNASSASVKPEDKA. Polar residues predominate over residues 395-405; the sequence is PAGTTNASSAS. A helical transmembrane segment spans residues 428–448; it reads MSRIIFPLLFGTFNLVYWATY.

The protein belongs to the ligand-gated ion channel (TC 1.A.9) family. Gamma-aminobutyric acid receptor (TC 1.A.9.5) subfamily. GABRA5 sub-subfamily. In terms of assembly, heteropentamer, formed by a combination of alpha (GABRA1-6), beta (GABRB1-3), gamma (GABRG1-3), delta (GABRD), epsilon (GABRE), rho (GABRR1-3), pi (GABRP) and theta (GABRQ) chains, each subunit exhibiting distinct physiological and pharmacological properties.

The protein resides in the postsynaptic cell membrane. The protein localises to the cell membrane. The enzyme catalyses chloride(in) = chloride(out). Its function is as follows. Alpha subunit of the heteropentameric ligand-gated chloride channel gated by gamma-aminobutyric acid (GABA), a major inhibitory neurotransmitter in the brain. GABA-gated chloride channels, also named GABA(A) receptors (GABAAR), consist of five subunits arranged around a central pore and contain GABA active binding site(s) located at the alpha and beta subunit interface(s). When activated by GABA, GABAARs selectively allow the flow of chloride anions across the cell membrane down their electrochemical gradient. GABAARs containing alpha-5/GABRA5 subunits are mainly extrasynaptic and contribute to the tonic GABAergic inhibition in the hippocampus. Extrasynaptic alpha-5-containing GABAARs in CA1 pyramidal neurons play a role in learning and memory processes. The polypeptide is Gamma-aminobutyric acid receptor subunit alpha-5 (GABRA5) (Bos taurus (Bovine)).